Here is a 288-residue protein sequence, read N- to C-terminus: Acetyl-coenzyme A carboxylase carboxyl transferase subunit beta (288 aa).

Residues 30 to 288 (IMTKCPKCKK…KMHQEVKTNA (259 aa)) enclose the CoA carboxyltransferase N-terminal domain. Zn(2+)-binding residues include Cys34, Cys37, Cys53, and Cys56. A C4-type zinc finger spans residues 34–56 (CPKCKKIMYTKELAENLNVCFNC).

This sequence belongs to the AccD/PCCB family. As to quaternary structure, acetyl-CoA carboxylase is a heterohexamer composed of biotin carboxyl carrier protein (AccB), biotin carboxylase (AccC) and two subunits each of ACCase subunit alpha (AccA) and ACCase subunit beta (AccD). Zn(2+) is required as a cofactor.

It is found in the cytoplasm. It carries out the reaction N(6)-carboxybiotinyl-L-lysyl-[protein] + acetyl-CoA = N(6)-biotinyl-L-lysyl-[protein] + malonyl-CoA. The protein operates within lipid metabolism; malonyl-CoA biosynthesis; malonyl-CoA from acetyl-CoA: step 1/1. Component of the acetyl coenzyme A carboxylase (ACC) complex. Biotin carboxylase (BC) catalyzes the carboxylation of biotin on its carrier protein (BCCP) and then the CO(2) group is transferred by the transcarboxylase to acetyl-CoA to form malonyl-CoA. The polypeptide is Acetyl-coenzyme A carboxylase carboxyl transferase subunit beta (Staphylococcus saprophyticus subsp. saprophyticus (strain ATCC 15305 / DSM 20229 / NCIMB 8711 / NCTC 7292 / S-41)).